The sequence spans 223 residues: Peptidyl-tRNA hydrolase (223 aa).

Tyr-14 contributes to the tRNA binding site. His-19 serves as the catalytic Proton acceptor. Residues Tyr-64, Asn-66, and Asn-112 each contribute to the tRNA site. The disordered stretch occupies residues 183-223; that stretch reads MNVRNTRPKPGKRQKGEGDGSTDPAPAAKEGKGPLPPTQKP.

Belongs to the PTH family. In terms of assembly, monomer.

Its subcellular location is the cytoplasm. The enzyme catalyses an N-acyl-L-alpha-aminoacyl-tRNA + H2O = an N-acyl-L-amino acid + a tRNA + H(+). Functionally, hydrolyzes ribosome-free peptidyl-tRNAs (with 1 or more amino acids incorporated), which drop off the ribosome during protein synthesis, or as a result of ribosome stalling. In terms of biological role, catalyzes the release of premature peptidyl moieties from peptidyl-tRNA molecules trapped in stalled 50S ribosomal subunits, and thus maintains levels of free tRNAs and 50S ribosomes. The chain is Peptidyl-tRNA hydrolase from Sorangium cellulosum (strain So ce56) (Polyangium cellulosum (strain So ce56)).